The following is a 492-amino-acid chain: N-succinylglutamate 5-semialdehyde dehydrogenase (492 aa).

Residue 220–225 (GSANTG) participates in NAD(+) binding. Catalysis depends on residues Glu-243 and Cys-277.

Belongs to the aldehyde dehydrogenase family. AstD subfamily.

The enzyme catalyses N-succinyl-L-glutamate 5-semialdehyde + NAD(+) + H2O = N-succinyl-L-glutamate + NADH + 2 H(+). The protein operates within amino-acid degradation; L-arginine degradation via AST pathway; L-glutamate and succinate from L-arginine: step 4/5. Functionally, catalyzes the NAD-dependent reduction of succinylglutamate semialdehyde into succinylglutamate. The polypeptide is N-succinylglutamate 5-semialdehyde dehydrogenase (Escherichia coli O6:H1 (strain CFT073 / ATCC 700928 / UPEC)).